The chain runs to 592 residues: Putative nucleoside-triphosphatase (592 aa).

Glu-200 serves as the catalytic Proton acceptor.

Belongs to the GDA1/CD39 NTPase family.

The catalysed reaction is a ribonucleoside 5'-triphosphate + H2O = a ribonucleoside 5'-diphosphate + phosphate + H(+). In Toxoplasma gondii, this protein is Putative nucleoside-triphosphatase (NTP4).